The chain runs to 262 residues: Light-harvesting complex-like protein 3 isotype 1, chloroplastic (262 aa).

The N-terminal 39 residues, 1–39 (MALFSPPISSSSLQNPNFIPKFSFSLLSSNRFSLLSVTR), are a transit peptide targeting the chloroplast. Helical transmembrane passes span 180-200 (AAMIGFFMAYFVDSLTGVGLV) and 202-222 (QMGNFFCKTLLFVAVAGVLFI).

Interacts with GGR. Forms homodimer, and heterodimer with LIL3.2. Expressed in photosynthetically active tissues (at protein level).

The protein resides in the plastid. Its subcellular location is the chloroplast thylakoid membrane. Functionally, light-harvesting-like protein required for biosynthesis of phytylated chlorophylls and alpha-tocopherol in green seedlings. Functions by anchoring geranylgeranyl reductase (GGR) in the thylakoid membrane, leading to the stabilization of GGR activity. Binds chlorophyll a in the thylakoid membrane. Plays a role in the regulation of chlorophyll biosynthesis under light stress and under standard growth conditions. This is Light-harvesting complex-like protein 3 isotype 1, chloroplastic (LIL3.1) from Arabidopsis thaliana (Mouse-ear cress).